A 105-amino-acid chain; its full sequence is Large ribosomal subunit protein uL24 (105 aa).

It belongs to the universal ribosomal protein uL24 family. In terms of assembly, part of the 50S ribosomal subunit.

Its function is as follows. One of two assembly initiator proteins, it binds directly to the 5'-end of the 23S rRNA, where it nucleates assembly of the 50S subunit. In terms of biological role, one of the proteins that surrounds the polypeptide exit tunnel on the outside of the subunit. The sequence is that of Large ribosomal subunit protein uL24 from Dictyoglomus thermophilum (strain ATCC 35947 / DSM 3960 / H-6-12).